The primary structure comprises 402 residues: Imidazolonepropionase (402 aa).

2 residues coordinate Fe(3+): His-69 and His-71. Positions 69 and 71 each coordinate Zn(2+). 4-imidazolone-5-propanoate is bound by residues Arg-78, Tyr-141, and His-174. Residue Tyr-141 coordinates N-formimidoyl-L-glutamate. His-239 is a Fe(3+) binding site. His-239 lines the Zn(2+) pocket. Gln-242 is a 4-imidazolone-5-propanoate binding site. Position 314 (Asp-314) interacts with Fe(3+). Residue Asp-314 coordinates Zn(2+). N-formimidoyl-L-glutamate-binding residues include Asn-316 and Gly-318. A 4-imidazolone-5-propanoate-binding site is contributed by Thr-319.

It belongs to the metallo-dependent hydrolases superfamily. HutI family. Zn(2+) serves as cofactor. Fe(3+) is required as a cofactor.

The protein resides in the cytoplasm. It catalyses the reaction 4-imidazolone-5-propanoate + H2O = N-formimidoyl-L-glutamate. It functions in the pathway amino-acid degradation; L-histidine degradation into L-glutamate; N-formimidoyl-L-glutamate from L-histidine: step 3/3. Its function is as follows. Catalyzes the hydrolytic cleavage of the carbon-nitrogen bond in imidazolone-5-propanoate to yield N-formimidoyl-L-glutamate. It is the third step in the universal histidine degradation pathway. The sequence is that of Imidazolonepropionase from Maricaulis maris (strain MCS10) (Caulobacter maris).